Consider the following 122-residue polypeptide: Biogenesis of lysosome-related organelles complex 1 subunit CNL1 (122 aa).

Residues 1–10 (MQDNSSHSRE) show a composition bias toward basic and acidic residues. The interval 1 to 21 (MQDNSSHSRESASAGDDPLGI) is disordered. Residues 63 to 95 (ENTIDKNIAKFKELLEKCDTLENHYEMLNQLAI) adopt a coiled-coil conformation.

This sequence belongs to the BLOC1S4 family. Component of the biogenesis of lysosome-related organelles complex-1 (BLOC-1) composed of at least BLI1, BLS1, CNL1, KXD1, SNN1 and VAB2.

The protein localises to the cytoplasm. In terms of biological role, component of the biogenesis of lysosome-related organelles complex-1 (BLOC-1), a complex that is involved in endosomal cargo sorting. The chain is Biogenesis of lysosome-related organelles complex 1 subunit CNL1 (CLN1) from Saccharomyces cerevisiae (strain Lalvin QA23) (Baker's yeast).